The chain runs to 106 residues: Nucleoid-associated protein Rpal_0620 (106 aa).

The protein belongs to the YbaB/EbfC family. As to quaternary structure, homodimer.

Its subcellular location is the cytoplasm. It localises to the nucleoid. Binds to DNA and alters its conformation. May be involved in regulation of gene expression, nucleoid organization and DNA protection. The chain is Nucleoid-associated protein Rpal_0620 from Rhodopseudomonas palustris (strain TIE-1).